The following is a 244-amino-acid chain: Small ribosomal subunit protein uS3 (244 aa).

One can recognise a KH type-2 domain in the interval valine 39–arginine 107. The interval valine 213 to arginine 244 is disordered. Basic and acidic residues predominate over residues glutamate 216–arginine 244.

This sequence belongs to the universal ribosomal protein uS3 family. In terms of assembly, part of the 30S ribosomal subunit. Forms a tight complex with proteins S10 and S14.

Binds the lower part of the 30S subunit head. Binds mRNA in the 70S ribosome, positioning it for translation. This chain is Small ribosomal subunit protein uS3, found in Xanthomonas euvesicatoria pv. vesicatoria (strain 85-10) (Xanthomonas campestris pv. vesicatoria).